The sequence spans 600 residues: Polypeptide N-acetylgalactosaminyltransferase (600 aa).

At 1–7 the chain is on the cytoplasmic side; that stretch reads MVRRKLR. The helical; Signal-anchor for type II membrane protein transmembrane segment at 8–28 threads the bilayer; sequence LLVILAGIWLVGIVVYLFKGD. The Lumenal segment spans residues 29 to 600; it reads DQSEFEKRVI…KWTFSLSKNR (572 aa). 5 disulfide bridges follow: cysteine 154/cysteine 382, cysteine 373/cysteine 451, cysteine 484/cysteine 501, cysteine 524/cysteine 541, and cysteine 567/cysteine 583. The segment at 163 to 268 is catalytic subdomain A; sequence LPDTSVIITF…EKWLEPLLDR (106 aa). 3 residues coordinate substrate: threonine 171, aspartate 204, and arginine 229. Residue aspartate 252 participates in Mn(2+) binding. Substrate is bound at residue serine 253. Histidine 254 contacts Mn(2+). A catalytic subdomain B region spans residues 328-390; it reads PIRTPMIAGG…PCSRVGHVFR (63 aa). A substrate-binding site is contributed by tryptophan 359. Residue histidine 387 participates in Mn(2+) binding. Residues arginine 390, histidine 393, and tyrosine 395 each coordinate substrate. Positions 466-595 constitute a Ricin B-type lectin domain; the sequence is KIPSVQDIAF…SSYTQKWTFS (130 aa).

This sequence belongs to the glycosyltransferase 2 family. GalNAc-T subfamily. The cofactor is Mn(2+). Post-translationally, O-glycosylated.

It localises to the golgi apparatus membrane. The enzyme catalyses L-seryl-[protein] + UDP-N-acetyl-alpha-D-galactosamine = a 3-O-[N-acetyl-alpha-D-galactosaminyl]-L-seryl-[protein] + UDP + H(+). It carries out the reaction L-threonyl-[protein] + UDP-N-acetyl-alpha-D-galactosamine = a 3-O-[N-acetyl-alpha-D-galactosaminyl]-L-threonyl-[protein] + UDP + H(+). Its pathway is protein modification; protein glycosylation. No change in activity by addition of up to 10% methanol or glycerol, or 5% acetonitrile. 40% reduction in activity by 10% acetonitrile or by lyophilization. Activity requires divalent cations, the best being Mn(2+) (10-20 mM), followed by Co(2+), Mg(2+) and Ca(2+). Loss of activity with Cu(2+) or in the presence of EDTA. Inhibited by UDP, but not by UMP, UTP, ADP or GDP nucleotides. No inhibition by galactose, N-acetylglucosamine or N-acetylgalactosamine sugars. In terms of biological role, catalyzes the initial reaction in O-linked oligosaccharide biosynthesis, the transfer of an N-acetyl-D-galactosamine residue to a serine or threonine residue on the protein receptor. Has a broad substrate specificity. Acceptor peptides include Muc2, Muc5Ac, Muc1a and Muc1a', with Muc2 as the best acceptor. Acts on non-glycosylated and mono- or multi-glycosylated peptide substrates. Transfers preferably to threonine rather than serine residue. Thr-15 is the most preferred site of glycosylation in Muc2 peptide PTTTPITTTTTVTPTPTPTGTQTK having proline residues at position -1, and at positions +1 and +3, where the number represents the distance from the C-terminal and N-terminal hydroxyl amino acid, respectively. Transfer of the N-acetyl-D-galactosamine (GalNAc) is optimal with proline residues at positions -3, -1, +1 and +3, but other amino acids are tolerated, although some, such as phenylalanine, isoleucine or leucine at -1, or lysine at +3 prevent the transfer completely. Second GalNAc is transferred to Muc2 Thr-2 or Thr-13, both of which have two proline residues nearby. Up to nine sites can be glycosylated within Muc2, but eight are used simultaneously since Thr-19 and Thr-21 are not detected to be glycosylated at the same time. Glycosylation is not detected of a potential site, which is next to an already glycosylated site, but only one amino acid is needed in between two glycosylation sites. Ser-5 is the preferred glycosylation site in Muc5Ac peptide GTTPSPVPTTSTTSAP into which up to four GalNAcs can be attached. Only the threonine residues are detected as pontential glycosylation sites in Muc1a APPAHGVTSAPDTRPAPGC and Muc1a' AHGVTSAPDTR peptides. Transferase activity is restricted to UDP-GalNAc as a donor, and none of the nucleotide sugars UDP-Gal, UDP-GlcNAc, GDP-fucose, UDP-xylose, UDP-glucuronic acid or CMP-neuraminic acid are utilized as donors. The sequence is that of Polypeptide N-acetylgalactosaminyltransferase from Biomphalaria glabrata (Bloodfluke planorb).